We begin with the raw amino-acid sequence, 130 residues long: MSKRTEQLGHEIQRILGEVIQYELKDPRVGFATVVGVEVTADLQIARVRISVMGTPDERRETMAALERARGFLRRRLAEELNYLRFVPELRLILDTSVDYSLHIDELLRRAAEERADSPPQQPEDDKPAE.

The protein belongs to the RbfA family. Monomer. Binds 30S ribosomal subunits, but not 50S ribosomal subunits or 70S ribosomes.

It localises to the cytoplasm. One of several proteins that assist in the late maturation steps of the functional core of the 30S ribosomal subunit. Associates with free 30S ribosomal subunits (but not with 30S subunits that are part of 70S ribosomes or polysomes). Required for efficient processing of 16S rRNA. May interact with the 5'-terminal helix region of 16S rRNA. This Roseiflexus sp. (strain RS-1) protein is Ribosome-binding factor A.